The chain runs to 476 residues: ATP synthase subunit beta (476 aa).

154–161 provides a ligand contact to ATP; it reads GGAGVGKT.

It belongs to the ATPase alpha/beta chains family. As to quaternary structure, F-type ATPases have 2 components, CF(1) - the catalytic core - and CF(0) - the membrane proton channel. CF(1) has five subunits: alpha(3), beta(3), gamma(1), delta(1), epsilon(1). CF(0) has three main subunits: a(1), b(2) and c(9-12). The alpha and beta chains form an alternating ring which encloses part of the gamma chain. CF(1) is attached to CF(0) by a central stalk formed by the gamma and epsilon chains, while a peripheral stalk is formed by the delta and b chains.

The protein resides in the cell inner membrane. The enzyme catalyses ATP + H2O + 4 H(+)(in) = ADP + phosphate + 5 H(+)(out). Produces ATP from ADP in the presence of a proton gradient across the membrane. The catalytic sites are hosted primarily by the beta subunits. The chain is ATP synthase subunit beta from Nitrobacter winogradskyi (strain ATCC 25391 / DSM 10237 / CIP 104748 / NCIMB 11846 / Nb-255).